The following is a 359-amino-acid chain: MVSETVEANGPLYPDYLPFYDPLEKVEMVGPFEHDDPGHRADPSFPNLLEKATNVLELSPHCGTELQGVQISELSTQGLDELALMVAERGCLVFRDQDFTNLGFEKQKEIASHFGPLHKHGWMPHPKNGPEEFVIVYDSKDDLRIRKSWARKSPIQFHVDQSPESQPPGATFFCMLESPPGAGGDTVISNMARAFDRLSPSFRKRLEGLKAVHTTANPIMREIRDNGPDSVLRRPITRTIHPVVVVHPVTKRKALFVNSSYTQSIVGWDEEESDYMLKFLFDHINRGHDFCCRVRYEPGTVVIWDQRVTQHSQTLDYSAGSRRHAFRLTPLANVPIPSLIEEDDGECAKDEGRMLLNLC.

His120 serves as a coordination point for substrate. The Fe cation site is built by His158 and Asp160. Thr186 contributes to the 2-oxoglutarate binding site. A Fe cation-binding site is contributed by His311. Positions 323 and 327 each coordinate 2-oxoglutarate. Arg327 lines the substrate pocket.

The protein belongs to the TfdA dioxygenase family. Fe(2+) serves as cofactor.

The protein operates within alkaloid biosynthesis. In terms of biological role, alpha-ketoglutarate-dependent dioxygenase; part of the gene cluster that mediates the biosynthesis of communesins, a prominent class of indole alkaloids with great potential as pharmaceuticals. Communesins are biosynthesized by the coupling of tryptamine and aurantioclavine, two building blocks derived from L-tryptophan. The L-tryptophan decarboxylase cnsB converts L-tryptophan to tryptamine, whereas the tryptophan dimethylallyltransferase cnsF converts L-tryptophan to 4-dimethylallyl tryptophan which is further transformed to aurantioclavine by the aurantioclavine synthase cnsA, probably aided by the catalase cnsD. The cytochrome P450 monooxygenase cnsC catalyzes the heterodimeric coupling between the two different indole moieties, tryptamine and aurantioclavine, to construct vicinal quaternary stereocenters and yield the heptacyclic communesin scaffold. The O-methyltransferase cnsE then methylates the communesin scaffold to produce communesin K, the simplest characterized communesin that contains the heptacyclic core. The dioxygenase cnsJ converts communesin K into communesin I. Acylation to introduce the hexadienyl group at position N16 of communesin I by the acyltransferase cnsK leads to the production of communesin B. The hexadienyl group is produced by the highly reducing polyketide synthase cnsI, before being hydrolytically removed from cnsI by the serine hydrolase cnsH, converted into hexadienyl-CoA by the CoA ligase cnsG, and then transferred to communesin I by cnsK. Surprisingly, cnsK may also be a promiscuous acyltransferase that can tolerate a range of acyl groups, including acetyl-, propionyl-, and butyryl-CoA, which lead to communesins A, G and H respectively. The roles of the alpha-ketoglutarate-dependent dioxygenases cnsM and cnsP have still to be determined. This chain is Alpha-ketoglutarate-dependent dioxygenase cnsM, found in Penicillium expansum (Blue mold rot fungus).